The sequence spans 420 residues: Na(+)/H(+) antiporter NhaA (420 aa).

The next 10 helical transmembrane spans lie at 34–54, 69–89, 107–127, 141–161, 168–190, 194–213, 271–291, 301–321, 342–362, and 374–394; these read TTGG…ANLG, LTIE…IAGL, LVPI…YTLF, IPMA…GAGL, FLLT…FFST, IWWL…MQHF, WSAG…HVSG, PISL…ITLG, IIAV…MTDL, and AKAS…AMLH.

Belongs to the NhaA Na(+)/H(+) (TC 2.A.33) antiporter family.

It localises to the cell membrane. It catalyses the reaction Na(+)(in) + 2 H(+)(out) = Na(+)(out) + 2 H(+)(in). In terms of biological role, na(+)/H(+) antiporter that extrudes sodium in exchange for external protons. In Cutibacterium acnes (strain DSM 16379 / KPA171202) (Propionibacterium acnes), this protein is Na(+)/H(+) antiporter NhaA.